The chain runs to 470 residues: V-type ATP synthase beta chain (470 aa).

It belongs to the ATPase alpha/beta chains family.

In terms of biological role, produces ATP from ADP in the presence of a proton gradient across the membrane. The V-type beta chain is a regulatory subunit. In Deinococcus geothermalis (strain DSM 11300 / CIP 105573 / AG-3a), this protein is V-type ATP synthase beta chain.